The following is a 334-amino-acid chain: N-acetyl-gamma-glutamyl-phosphate reductase (334 aa).

The active site involves Cys-154.

The protein belongs to the NAGSA dehydrogenase family. Type 1 subfamily.

It is found in the cytoplasm. The enzyme catalyses N-acetyl-L-glutamate 5-semialdehyde + phosphate + NADP(+) = N-acetyl-L-glutamyl 5-phosphate + NADPH + H(+). The protein operates within amino-acid biosynthesis; L-arginine biosynthesis; N(2)-acetyl-L-ornithine from L-glutamate: step 3/4. Its function is as follows. Catalyzes the NADPH-dependent reduction of N-acetyl-5-glutamyl phosphate to yield N-acetyl-L-glutamate 5-semialdehyde. This chain is N-acetyl-gamma-glutamyl-phosphate reductase, found in Buchnera aphidicola subsp. Acyrthosiphon pisum (strain Tuc7).